Here is a 191-residue protein sequence, read N- to C-terminus: Probable GTP-binding protein EngB (191 aa).

An EngB-type G domain is found at 13–189 (DRLEVAFAGR…RAEIVALLPD (177 aa)). GTP contacts are provided by residues 21 to 28 (GRSNVGKS), 48 to 52 (GRTRE), 67 to 70 (DLPG), 134 to 137 (TKTD), and 168 to 170 (TSS). Residues S28 and T50 each coordinate Mg(2+).

It belongs to the TRAFAC class TrmE-Era-EngA-EngB-Septin-like GTPase superfamily. EngB GTPase family. Requires Mg(2+) as cofactor.

In terms of biological role, necessary for normal cell division and for the maintenance of normal septation. This Maricaulis maris (strain MCS10) (Caulobacter maris) protein is Probable GTP-binding protein EngB.